The following is a 159-amino-acid chain: Transmembrane protein 42 (159 aa).

Transmembrane regions (helical) follow at residues 37 to 57 (FWGVFNCLCAGSFGALAAASA), 59 to 79 (LAFGSEVSMGLCVLGIIVMAS), 100 to 120 (IASVTVTFSNILSSAFLGYVL), and 124 to 144 (CQEVLWWGGVFLILCGLTLIH).

It is found in the membrane. The sequence is that of Transmembrane protein 42 (TMEM42) from Pongo abelii (Sumatran orangutan).